The primary structure comprises 476 residues: Glycogen synthase (476 aa).

ADP-alpha-D-glucose is bound at residue Lys-15.

This sequence belongs to the glycosyltransferase 1 family. Bacterial/plant glycogen synthase subfamily.

The catalysed reaction is [(1-&gt;4)-alpha-D-glucosyl](n) + ADP-alpha-D-glucose = [(1-&gt;4)-alpha-D-glucosyl](n+1) + ADP + H(+). It functions in the pathway glycan biosynthesis; glycogen biosynthesis. In terms of biological role, synthesizes alpha-1,4-glucan chains using ADP-glucose. This chain is Glycogen synthase, found in Bacillus anthracis.